A 780-amino-acid polypeptide reads, in one-letter code: ATP-dependent 6-phosphofructokinase, muscle type (780 aa).

Thr-2 is subject to N-acetylthreonine. The segment at 2-390 is N-terminal catalytic PFK domain 1; sequence THEEHHAAKT…NWEVYKLLAH (389 aa). Residues Gly-25, 88–89, and 118–121 contribute to the ATP site; these read RC and GDGS. Asp-119 serves as a coordination point for Mg(2+). A Phosphoserine modification is found at Ser-133. Substrate-binding positions include 164-166, Arg-201, 208-210, Glu-264, Arg-292, and 298-301; these read SID, MGR, and HVQR. Asp-166 (proton acceptor) is an active-site residue. Position 377 is a phosphoserine (Ser-377). Positions 391 to 401 are interdomain linker; that stretch reads VRPPVSKSGSH. Residues 402-780 are C-terminal regulatory PFK domain 2; it reads TVAVMNVGAP…TRKRSGEAAV (379 aa). Residues Arg-471 and 528–532 contribute to the beta-D-fructose 2,6-bisphosphate site; that span reads TVSNN. Ser-530 carries an O-linked (GlcNAc) serine glycan. Lys-557 is modified (N6-(2-hydroxyisobutyryl)lysine). Residues Arg-566, 573–575, Glu-629, Arg-655, and 661–664 each bind beta-D-fructose 2,6-bisphosphate; these read MGG and HMQQ. The residue at position 667 (Ser-667) is a Phosphoserine. Arg-735 is a binding site for beta-D-fructose 2,6-bisphosphate. Ser-775 carries the post-translational modification Phosphoserine.

This sequence belongs to the phosphofructokinase type A (PFKA) family. ATP-dependent PFK group I subfamily. Eukaryotic two domain clade 'E' sub-subfamily. Homo- and heterotetramers. Phosphofructokinase (PFK) enzyme functions as a tetramer composed of different combinations of 3 types of subunits, called PFKM (where M stands for Muscle), PFKL (Liver) and PFKP (Platelet). The composition of the PFK tetramer differs according to the tissue type it is present in. In muscles, it is composed of 4 PFKM subunits (also called M4). In the liver, the predominant form is a tetramer of PFKL subunits (L4). In erythrocytes, both PFKM and PFKL subunits randomly tetramerize to form M4, L4 and other combinations (ML3, M2L2, M3L). The kinetic and regulatory properties of the tetrameric enzyme are dependent on the subunit composition, hence can vary across tissues. Interacts (via C-terminus) with HK1 (via N-terminal spermatogenic cell-specific region). It depends on Mg(2+) as a cofactor. GlcNAcylation decreases enzyme activity.

It is found in the cytoplasm. The catalysed reaction is beta-D-fructose 6-phosphate + ATP = beta-D-fructose 1,6-bisphosphate + ADP + H(+). It functions in the pathway carbohydrate degradation; glycolysis; D-glyceraldehyde 3-phosphate and glycerone phosphate from D-glucose: step 3/4. Allosterically activated by ADP, AMP, or fructose 2,6-bisphosphate, and allosterically inhibited by ATP or citrate. Its function is as follows. Catalyzes the phosphorylation of D-fructose 6-phosphate to fructose 1,6-bisphosphate by ATP, the first committing step of glycolysis. In Homo sapiens (Human), this protein is ATP-dependent 6-phosphofructokinase, muscle type (PFKM).